The sequence spans 185 residues: MAEAKYEPRLKKEYVERIRKAMQEQFSYANEMMIPKLDKIVINMGVGEATADSKKPTVAAADLAAIAGQKPVITRARNSIAGFKVREQMPIGAKVTLRGARMYEFLDRLVNIALPRVRDFRGLNPKSFDGRGNFAMGIKEHIVFLEINYDKVDQMWGMDIIVCTTATTDDEARALLKEFSFPFRQ.

This sequence belongs to the universal ribosomal protein uL5 family. In terms of assembly, part of the 50S ribosomal subunit; part of the 5S rRNA/L5/L18/L25 subcomplex. Contacts the 5S rRNA and the P site tRNA. Forms a bridge to the 30S subunit in the 70S ribosome.

In terms of biological role, this is one of the proteins that bind and probably mediate the attachment of the 5S RNA into the large ribosomal subunit, where it forms part of the central protuberance. In the 70S ribosome it contacts protein S13 of the 30S subunit (bridge B1b), connecting the 2 subunits; this bridge is implicated in subunit movement. Contacts the P site tRNA; the 5S rRNA and some of its associated proteins might help stabilize positioning of ribosome-bound tRNAs. The protein is Large ribosomal subunit protein uL5 of Rhizobium leguminosarum bv. trifolii (strain WSM2304).